The sequence spans 445 residues: Na(+)-translocating NADH-quinone reductase subunit A (445 aa).

The protein belongs to the NqrA family. As to quaternary structure, composed of six subunits; NqrA, NqrB, NqrC, NqrD, NqrE and NqrF.

The catalysed reaction is a ubiquinone + n Na(+)(in) + NADH + H(+) = a ubiquinol + n Na(+)(out) + NAD(+). In terms of biological role, NQR complex catalyzes the reduction of ubiquinone-1 to ubiquinol by two successive reactions, coupled with the transport of Na(+) ions from the cytoplasm to the periplasm. NqrA to NqrE are probably involved in the second step, the conversion of ubisemiquinone to ubiquinol. This chain is Na(+)-translocating NADH-quinone reductase subunit A, found in Pseudomonas aeruginosa (strain UCBPP-PA14).